The chain runs to 67 residues: Large ribosomal subunit protein uL29 (67 aa).

Belongs to the universal ribosomal protein uL29 family.

The polypeptide is Large ribosomal subunit protein uL29 (Gemmatimonas aurantiaca (strain DSM 14586 / JCM 11422 / NBRC 100505 / T-27)).